We begin with the raw amino-acid sequence, 456 residues long: MNFDIEKLEKIKVRDGQEFFFIQTFGCQMNEEDSEKLSGMLKSQGYEETENRDEASIVIFNTCCVRENAENKVFGNLGRLKNQKEKNPNLIIALCGCMMQQKGMADEILSRFPYVDIIFGTHNAYKFPEYLHRVQVEGVQVKEIFDKETEIVEGVPIDRKSNVKAFVTIMYGCNNFCTYCVVPYVRGRERSRRPEDIENEIKELVSNGYKEITLLGQNVNSYGKGLEEEITFAQLLRRINEIDGLERLRFMTSHPKDLTLDVVYAIRDCDKLCEQIHLPVQSGSNEILQKMNRHYNKEQYLELAKKIREEIPDVTFSTDIIVGFPGETEEDFEETINLVKEVRYDAAFTFIYSRRNHTPADKMEDQIPDDVKHDRFNRLVAAVNEGIVVGNKAAEGKIYEVLVEGTSKNNENKLTGRTRNAKLVNFDGCKEMIGKLVKVKIIEAKSFSLVGEVVEQ.

In terms of domain architecture, MTTase N-terminal spans 18-136; the sequence is EFFFIQTFGC…FPEYLHRVQV (119 aa). [4Fe-4S] cluster contacts are provided by Cys-27, Cys-63, Cys-97, Cys-173, Cys-177, and Cys-180. The 233-residue stretch at 159 to 391 folds into the Radical SAM core domain; the sequence is RKSNVKAFVT…AVNEGIVVGN (233 aa). In terms of domain architecture, TRAM spans 392 to 455; it reads KAAEGKIYEV…SFSLVGEVVE (64 aa).

This sequence belongs to the methylthiotransferase family. MiaB subfamily. As to quaternary structure, monomer. It depends on [4Fe-4S] cluster as a cofactor.

It is found in the cytoplasm. It catalyses the reaction N(6)-dimethylallyladenosine(37) in tRNA + (sulfur carrier)-SH + AH2 + 2 S-adenosyl-L-methionine = 2-methylsulfanyl-N(6)-dimethylallyladenosine(37) in tRNA + (sulfur carrier)-H + 5'-deoxyadenosine + L-methionine + A + S-adenosyl-L-homocysteine + 2 H(+). Catalyzes the methylthiolation of N6-(dimethylallyl)adenosine (i(6)A), leading to the formation of 2-methylthio-N6-(dimethylallyl)adenosine (ms(2)i(6)A) at position 37 in tRNAs that read codons beginning with uridine. This Clostridium botulinum (strain Alaska E43 / Type E3) protein is tRNA-2-methylthio-N(6)-dimethylallyladenosine synthase.